A 1207-amino-acid chain; its full sequence is DNA-directed RNA polymerase subunit beta' (1207 aa).

The Zn(2+) site is built by cysteine 60, cysteine 62, cysteine 75, and cysteine 78. Mg(2+)-binding residues include aspartate 449, aspartate 451, and aspartate 453. Positions 822, 896, 903, and 906 each coordinate Zn(2+).

The protein belongs to the RNA polymerase beta' chain family. As to quaternary structure, the RNAP catalytic core consists of 2 alpha, 1 beta, 1 beta' and 1 omega subunit. When a sigma factor is associated with the core the holoenzyme is formed, which can initiate transcription. Mg(2+) is required as a cofactor. It depends on Zn(2+) as a cofactor.

The enzyme catalyses RNA(n) + a ribonucleoside 5'-triphosphate = RNA(n+1) + diphosphate. Its function is as follows. DNA-dependent RNA polymerase catalyzes the transcription of DNA into RNA using the four ribonucleoside triphosphates as substrates. This is DNA-directed RNA polymerase subunit beta' from Staphylococcus epidermidis (strain ATCC 35984 / DSM 28319 / BCRC 17069 / CCUG 31568 / BM 3577 / RP62A).